Here is a 475-residue protein sequence, read N- to C-terminus: MERQRSFSVKSTRVLAFIITIISSAIVFFTFFSSSLLKSNSSLYPTPEANFQIDLSPIAAISDSSVSPQASPILISTHFNSPENTSGSSKISVFEQKISGESLVKEVREIANLTSIKVIELPSNNGEDKKTEKRIEECDVTKGKWVYDSDYPLYTNASCPFIDEGFGCQSNGRLDLNYMNWRWEPQDCHAPRFNATKMLEMIRGKRLVFVGDSINRNQWESMLCLLFQAVKDPKRVYETHNRRITKEKGNYSFRFVDYKCTVEFYVTHFLVREGRARIGKKRRETLRIDAMDRTSSRWKGANILVFNTAHWWSHYKTKSGVNYYQEGDLIHPKLDVSTAFKKALQTWSSWVDKNVDPKKTRVFFRSAAPSHFSGGEWNSGGHCREANMPLNQTFKPSYSSKKSIVEDVLKQMRTPVTLLNVSGLSQYRIDAHPSIYGTKPENRRSRAVQDCSHWCLPGVPDTWNHFLYLHLLHKR.

A helical; Signal-anchor for type II membrane protein membrane pass occupies residues 14 to 34 (VLAFIITIISSAIVFFTFFSS). Positions 211–213 (GDS) match the GDS motif motif. Residues 450–464 (DCSHWCLPGVPDTWN) carry the DCXHWCLPGXXDXWN motif motif.

It belongs to the PC-esterase family. TBL subfamily.

The protein resides in the membrane. Functionally, may act as a bridging protein that binds pectin and other cell wall polysaccharides. Probably involved in maintaining esterification of pectins. May be involved in the specific O-acetylation of cell wall polymers. This is Protein trichome birefringence-like 6 (TBL6) from Arabidopsis thaliana (Mouse-ear cress).